Reading from the N-terminus, the 111-residue chain is Small ribosomal subunit protein mS38 (111 aa).

The span at 82-99 shows a compositional bias: basic residues; the sequence is RKRKKKMKKHKLRKRRKR. The disordered stretch occupies residues 82–111; it reads RKRKKKMKKHKLRKRRKREKAERRKLSQGR. Basic and acidic residues predominate over residues 100 to 111; sequence EKAERRKLSQGR.

The protein belongs to the mitochondrion-specific ribosomal protein mS38 family. As to quaternary structure, component of the mitochondrial small ribosomal subunit (mt-SSU). Mature yeast 74S mitochondrial ribosomes consist of a small (37S) and a large (54S) subunit. The 37S small subunit contains a 15S ribosomal RNA (15S mt-rRNA) and 34 different proteins. The 54S large subunit contains a 21S rRNA (21S mt-rRNA) and 46 different proteins.

The protein localises to the mitochondrion. It is found in the mitochondrion inner membrane. In terms of biological role, component of the mitochondrial ribosome (mitoribosome), a dedicated translation machinery responsible for the synthesis of mitochondrial genome-encoded proteins, including at least some of the essential transmembrane subunits of the mitochondrial respiratory chain. The mitoribosomes are attached to the mitochondrial inner membrane and translation products are cotranslationally integrated into the membrane. mS38 is also involved in the splicing of the COX1 mRNA. In Saccharomyces cerevisiae (strain ATCC 204508 / S288c) (Baker's yeast), this protein is Small ribosomal subunit protein mS38 (QRI5).